Consider the following 347-residue polypeptide: Selenide, water dikinase 2 (347 aa).

Sec18 is an active-site residue. Position 18 (Sec18) is a non-standard amino acid, selenocysteine. Residues Lys21 and 48–50 (TSD) contribute to the ATP site. Residue Asp51 participates in Mg(2+) binding. ATP-binding positions include Asp68, Asp91, and 138–140 (GHT). Asp91 serves as a coordination point for Mg(2+). Asp226 contacts Mg(2+).

The protein belongs to the selenophosphate synthase 1 family. Class I subfamily. In terms of assembly, homodimer. Mg(2+) serves as cofactor.

The enzyme catalyses hydrogenselenide + ATP + H2O = selenophosphate + AMP + phosphate + 2 H(+). Synthesizes selenophosphate from selenide and ATP. The sequence is that of Selenide, water dikinase 2 from Peptoclostridium acidaminophilum (Eubacterium acidaminophilum).